Reading from the N-terminus, the 559-residue chain is Small ribosomal subunit protein uS3m (559 aa).

Residues 113-134 (EGTEEERNEVRGRGAGKRVESI) are disordered. Residues 120–134 (NEVRGRGAGKRVESI) show a composition bias toward basic and acidic residues.

The protein belongs to the universal ribosomal protein uS3 family.

The protein localises to the mitochondrion. This Zea mays (Maize) protein is Small ribosomal subunit protein uS3m (RPS3).